Here is a 100-residue protein sequence, read N- to C-terminus: Large ribosomal subunit protein uL23 (100 aa).

This sequence belongs to the universal ribosomal protein uL23 family. Part of the 50S ribosomal subunit. Contacts protein L29, and trigger factor when it is bound to the ribosome.

In terms of biological role, one of the early assembly proteins it binds 23S rRNA. One of the proteins that surrounds the polypeptide exit tunnel on the outside of the ribosome. Forms the main docking site for trigger factor binding to the ribosome. This chain is Large ribosomal subunit protein uL23, found in Photobacterium profundum (strain SS9).